Here is a 484-residue protein sequence, read N- to C-terminus: FAD-dependent monooxygenase aurC (484 aa).

Residues 1-21 (MGAYSFRVIIVGGSITGMTLA) form the signal peptide. The FAD site is built by E35, G49, and R108. Residue Y216 is part of the active site. FAD-binding residues include D308 and G321. A helical transmembrane segment spans residues 451 to 471 (FAVASLIVLIVVLARALDSPA).

The protein belongs to the paxM FAD-dependent monooxygenase family. FAD is required as a cofactor.

Its subcellular location is the membrane. The protein operates within polyketide biosynthesis. Its function is as follows. FAD-dependent monooxygenase; part of the gene cluster that mediates the biosynthesis of aurovertins, fungal polyketides that exhibit potent inhibition of adenosine triphosphate synthase. Tha biosynthesis starts with the HR-PKS aurA that selects propionate as the starter unit; synthesizes a hexa-ene chain through the repeated functions of the KR and DH domains in the first six iterations; selectively introduces three alpha-methyl substitutions at C4, C6, and C16 using the S-adensylmethionine-dependent cMET; and shuts off KR and DH in the last three iterations to afford a 1,3,5-triketo portion that can undergo intramolecular cyclization to yield the alpha-pyrone intermediate. AurE may act as a cyclase and enhances the rate of pyrone formation and product release of aurA. The methyltransferase aurB then methylates the C17 hydroxyl group. C17 methylation is required to initiate epoxidation by the downstream monooxygenase aurC. The monooxygenase aurC and the epoxide hydrolase aurD can iteratively transform the terminal triene portion of the methylated precursor into the dioxabicyclo[3.2.1]octane scaffold of aurovertin E. Epoxidation modifications of the precursor occur in two separate steps; bis-epoxidation of the two terminal olefins takes place first, followed by another epoxidation that occurs at C7-C8 after tetrahydrofuran formation. The O-acyltransferase aurG converts aurovertin E to aurovertin A. This is FAD-dependent monooxygenase aurC from Calcarisporium arbuscula (Dendryphion arbuscula).